A 579-amino-acid polypeptide reads, in one-letter code: Zinc finger protein 248 (579 aa).

One can recognise a KRAB domain in the interval 8 to 79 (VSFKDVCVDF…EKGFPSQCHP (72 aa)). The segment at 240–264 (TVCKYNECGRTFIESLKLNISQRPH) adopts a C2H2-type 1; degenerate zinc-finger fold. A Glycyl lysine isopeptide (Lys-Gly) (interchain with G-Cter in SUMO2) cross-link involves residue lysine 341. 7 consecutive C2H2-type zinc fingers follow at residues 380–402 (FECG…QRTH), 408–430 (YECT…QRTH), 436–458 (YECK…QRTH), 464–486 (YECN…QRTH), 492–514 (FICN…QRTH), 520–543 (YKCN…RTHT), and 548–570 (YECN…QRIH).

This sequence belongs to the krueppel C2H2-type zinc-finger protein family.

The protein resides in the nucleus. In terms of biological role, may be involved in transcriptional regulation. This is Zinc finger protein 248 (ZNF248) from Homo sapiens (Human).